A 406-amino-acid chain; its full sequence is Cysteine desulfurase (406 aa).

At lysine 226 the chain carries N6-(pyridoxal phosphate)lysine. Cysteine 364 acts as the Cysteine persulfide intermediate in catalysis.

This sequence belongs to the class-V pyridoxal-phosphate-dependent aminotransferase family. Csd subfamily. In terms of assembly, homodimer. Interacts with SufE and the SufBCD complex composed of SufB, SufC and SufD. The interaction with SufE is required to mediate the direct transfer of the sulfur atom from the S-sulfanylcysteine. Pyridoxal 5'-phosphate is required as a cofactor.

Its subcellular location is the cytoplasm. The catalysed reaction is (sulfur carrier)-H + L-cysteine = (sulfur carrier)-SH + L-alanine. It catalyses the reaction L-selenocysteine + AH2 = hydrogenselenide + L-alanine + A + H(+). Its pathway is cofactor biosynthesis; iron-sulfur cluster biosynthesis. In terms of biological role, cysteine desulfurases mobilize the sulfur from L-cysteine to yield L-alanine, an essential step in sulfur metabolism for biosynthesis of a variety of sulfur-containing biomolecules. Component of the suf operon, which is activated and required under specific conditions such as oxidative stress and iron limitation. Acts as a potent selenocysteine lyase in vitro, that mobilizes selenium from L-selenocysteine. Selenocysteine lyase activity is however unsure in vivo. The sequence is that of Cysteine desulfurase from Escherichia coli O157:H7 (strain EC4115 / EHEC).